An 85-amino-acid polypeptide reads, in one-letter code: U4-theraphotoxin-Hhn1e (85 aa).

An N-terminal signal peptide occupies residues 1-22 (MKVTLIAILTCAAVLVLHTTAA). The propeptide occupies 23–48 (EELEAESQLMEVGMPDTELAAVDEER). Cystine bridges form between Cys-52–Cys-66, Cys-56–Cys-77, and Cys-71–Cys-82.

Belongs to the neurotoxin 12 (Hwtx-2) family. 02 (Hwtx-2) subfamily. As to expression, expressed by the venom gland.

Its subcellular location is the secreted. Functionally, postsynaptic neurotoxin. This Cyriopagopus hainanus (Chinese bird spider) protein is U4-theraphotoxin-Hhn1e.